The sequence spans 383 residues: ATP phosphoribosyltransferase regulatory subunit (383 aa).

This sequence belongs to the class-II aminoacyl-tRNA synthetase family. HisZ subfamily. Heteromultimer composed of HisG and HisZ subunits.

Its subcellular location is the cytoplasm. It participates in amino-acid biosynthesis; L-histidine biosynthesis; L-histidine from 5-phospho-alpha-D-ribose 1-diphosphate: step 1/9. Its function is as follows. Required for the first step of histidine biosynthesis. May allow the feedback regulation of ATP phosphoribosyltransferase activity by histidine. The sequence is that of ATP phosphoribosyltransferase regulatory subunit from Chromobacterium violaceum (strain ATCC 12472 / DSM 30191 / JCM 1249 / CCUG 213 / NBRC 12614 / NCIMB 9131 / NCTC 9757 / MK).